A 462-amino-acid polypeptide reads, in one-letter code: Argininosuccinate lyase (462 aa).

The protein belongs to the lyase 1 family. Argininosuccinate lyase subfamily.

The protein localises to the cytoplasm. It carries out the reaction 2-(N(omega)-L-arginino)succinate = fumarate + L-arginine. It functions in the pathway amino-acid biosynthesis; L-arginine biosynthesis; L-arginine from L-ornithine and carbamoyl phosphate: step 3/3. This Bacillus cereus (strain AH820) protein is Argininosuccinate lyase.